A 584-amino-acid chain; its full sequence is Arginine--tRNA ligase (584 aa).

Positions proline 127–histidine 137 match the 'HIGH' region motif.

The protein belongs to the class-I aminoacyl-tRNA synthetase family. As to quaternary structure, monomer.

Its subcellular location is the cytoplasm. The catalysed reaction is tRNA(Arg) + L-arginine + ATP = L-arginyl-tRNA(Arg) + AMP + diphosphate. In Borrelia turicatae (strain 91E135), this protein is Arginine--tRNA ligase.